The chain runs to 638 residues: Protein NSP-INTERACTING KINASE 1 (638 aa).

A signal peptide spans 1–31 (MESTIVMMMMITRSFFCFLGFLCLLCSSVHG). Residues 32–248 (LLSPKGVNFE…AGGSRNHKMA (217 aa)) lie on the Extracellular side of the membrane. 2 N-linked (GlcNAc...) asparagine glycosylation sites follow: N92 and N103. LRR repeat units follow at residues 104–128 (LTNLRIVLLQNNNIKGKIPAEIGRL), 130–152 (RLETLDLSDNFFHGEIPFSVGYL), 153–175 (QSLQYLRLNNNSLSGVFPLSLSN), and 177–200 (TQLAFLDLSYNNLSGPVPRFAAKT). N-linked (GlcNAc...) asparagine glycosylation is found at N162, N175, N188, N219, and N231. A helical transmembrane segment spans residues 249 to 269 (IAVGSSVGTVSLIFIAVGLFL). Residues 270–638 (WWRQRHNQNT…VQAMELSGPR (369 aa)) are Cytoplasmic-facing. Position 309 is a phosphothreonine (T309). The region spanning 312 to 593 (FSSKNLLGKG…EGDGLAEKWE (282 aa)) is the Protein kinase domain. 318–326 (LGKGGYGNV) contributes to the ATP binding site. T335 carries the post-translational modification Phosphothreonine. K340 lines the ATP pocket. Residues S393 and S396 each carry the phosphoserine modification. The segment at 422–502 (YLHEQCDPKI…DVFGFGILLL (81 aa)) is interaction with geminivirus NSP protein. D435 serves as the catalytic Proton acceptor. Residues T468, T469, and T474 each carry the phosphothreonine modification. Phosphotyrosine is present on Y482. A Phosphoserine modification is found at S484. Position 485 is a phosphothreonine (T485). S489 is subject to Phosphoserine. T566 is subject to Phosphothreonine.

It belongs to the protein kinase superfamily. Ser/Thr protein kinase family. As to quaternary structure, oligomer. Interacts with geminivirus nuclear shuttle protein (NSP). Interacts with RPL10A and RPL18B. In terms of processing, autophosphorylated. In terms of tissue distribution, expressed in seedlings, leaves, roots, stems and flowers.

The protein localises to the cell membrane. The catalysed reaction is L-seryl-[protein] + ATP = O-phospho-L-seryl-[protein] + ADP + H(+). It catalyses the reaction L-threonyl-[protein] + ATP = O-phospho-L-threonyl-[protein] + ADP + H(+). Its activity is regulated as follows. Inhibited by the viral nuclear shuttle protein (NSP) that binds to the region required for oligomerization. In terms of biological role, involved in defense response to geminivirus and begomovirus infection via regulation of the nuclear trafficking of RPL10A. Phosphorylates RPL10A in vitro. Activation of NIK1 down-regulates cytosolic translation. The sequence is that of Protein NSP-INTERACTING KINASE 1 from Arabidopsis thaliana (Mouse-ear cress).